Reading from the N-terminus, the 196-residue chain is GTP cyclohydrolase 1 (196 aa).

3 residues coordinate Zn(2+): cysteine 86, histidine 89, and cysteine 158.

The protein belongs to the GTP cyclohydrolase I family. As to quaternary structure, homomer.

It carries out the reaction GTP + H2O = 7,8-dihydroneopterin 3'-triphosphate + formate + H(+). The protein operates within cofactor biosynthesis; 7,8-dihydroneopterin triphosphate biosynthesis; 7,8-dihydroneopterin triphosphate from GTP: step 1/1. The protein is GTP cyclohydrolase 1 of Clostridium botulinum (strain Loch Maree / Type A3).